A 2241-amino-acid polypeptide reads, in one-letter code: Large tegument protein deneddylase (2241 aa).

The interval 1–238 (MKVTQASCHQ…IDLTGVVRES (238 aa)) is deubiquitination activity. In terms of domain architecture, Peptidase C76 spans 4–226 (TQASCHQGDI…AARLVSTYRD (223 aa)). Residues cysteine 24, aspartate 160, and histidine 162 contribute to the active site. Residues 239 to 314 (ADTAATTTTA…STTSKTLATA (76 aa)) are disordered. Positions 240–250 (DTAATTTTAAP) are enriched in low complexity. The span at 251–268 (SLPPLPDPIVDPGCPPGV) shows a compositional bias: pro residues. Over residues 304–314 (PSTTSKTLATA) the composition is skewed to low complexity. Residues 327–331 (SSAVP) are interaction with inner tegument protein. The segment at 1170 to 1229 (RSSQQKMEEQLQETRQQMTETSERLDRSLRQDPGSSSVTRVPEKPFKGQELAGRITPPPA) is disordered. Residues 1190-1199 (TSERLDRSLR) show a composition bias toward basic and acidic residues.

The protein belongs to the herpesviridae large tegument protein family. As to quaternary structure, interacts with host CUL1 and CUL4A; these interactions inhibit the E3 ligase activity of cullins. Interacts with inner tegument protein. Interacts with capsid vertex specific component CVC2. Interacts with the major capsid protein/MCP.

It is found in the virion tegument. The protein resides in the host cytoplasm. Its subcellular location is the host nucleus. It catalyses the reaction Thiol-dependent hydrolysis of ester, thioester, amide, peptide and isopeptide bonds formed by the C-terminal Gly of ubiquitin (a 76-residue protein attached to proteins as an intracellular targeting signal).. Its function is as follows. Large tegument protein that plays multiple roles in the viral cycle. During viral entry, remains associated with the capsid while most of the tegument is detached and participates in the capsid transport toward the host nucleus. Plays a role in the routing of the capsid at the nuclear pore complex and subsequent uncoating. Within the host nucleus, acts as a deneddylase and promotes the degradation of nuclear CRLs (cullin-RING ubiquitin ligases) and thereby stabilizes nuclear CRL substrates, while cytoplasmic CRLs remain unaffected. These modifications prevent host cell cycle S-phase progression and create a favorable environment allowing efficient viral genome replication. Participates later in the secondary envelopment of capsids. Indeed, plays a linker role for the association of the outer viral tegument to the capsids together with the inner tegument protein. The polypeptide is Large tegument protein deneddylase (UL48) (Human cytomegalovirus (strain AD169) (HHV-5)).